A 638-amino-acid chain; its full sequence is Gamma-aminobutyric acid receptor subunit theta (638 aa).

Residues 1–21 form the signal peptide; the sequence is MGIRGMLRAAALLLLIRTWLA. Residues 22-267 lie on the Extracellular side of the membrane; it reads ESNGPSPTPK…FQVQREVRSY (246 aa). Asn127 carries N-linked (GlcNAc...) asparagine glycosylation. Cys183 and Cys197 are disulfide-bonded. Residues 268–288 form a helical membrane-spanning segment; that stretch reads LVQVYWPTVLTTILSWISFWM. The Cytoplasmic segment spans residues 289–296; sequence NYDSSAAR. The chain crosses the membrane as a helical span at residues 297-314; that stretch reads VTIGLTSILVLTTIDSHM. Topologically, residues 315 to 325 are extracellular; it reads RDKLPHISCIK. A helical membrane pass occupies residues 326 to 346; it reads AIDIYILVCLFFVFLSLLEYV. At 347-617 the chain is on the cytoplasmic side; that stretch reads YINYLFFSQV…NRVPKVDRWS (271 aa). The interval 491 to 515 is disordered; it reads ACDDEDSEESLSSEESHGHGSSHTG. Residues 492-502 show a composition bias toward acidic residues; it reads CDDEDSEESLS. Residues 618–638 traverse the membrane as a helical segment; the sequence is RFLFPLSFGLFNVVYWLYHVY.

This sequence belongs to the ligand-gated ion channel (TC 1.A.9) family. Gamma-aminobutyric acid receptor (TC 1.A.9.5) subfamily. GABRQ sub-subfamily. As to quaternary structure, heteropentamer, formed by a combination of alpha (GABRA1-6), beta (GABRB1-3), gamma (GABRG1-3), delta (GABRD), epsilon (GABRE), rho (GABRR1-3), pi (GABRP) and theta (GABRQ) chains, each subunit exhibiting distinct physiological and pharmacological properties. Expressed in brain, lung, and spleen.

The protein resides in the postsynaptic cell membrane. The protein localises to the cell membrane. It catalyses the reaction chloride(in) = chloride(out). With respect to regulation, potentiated by etomidate, propofol, pregnanolone and pentobarbital. Theta subunit of the heteropentameric ligand-gated chloride channel gated by gamma-aminobutyric acid (GABA), a major inhibitory neurotransmitter in the brain. GABA-gated chloride channels, also named GABA(A) receptors (GABAAR), consist of five subunits arranged around a central pore and contain GABA active binding site(s) located at the alpha and beta subunit interfaces. When activated by GABA, GABAARs selectively allow the flow of chloride anions across the cell membrane down their electrochemical gradient. The protein is Gamma-aminobutyric acid receptor subunit theta of Mus musculus (Mouse).